Consider the following 853-residue polypeptide: Dynamin-A (853 aa).

The 275-residue stretch at Pro22–Pro296 folds into the Dynamin-type G domain. A G1 motif region spans residues Gly32–Ser39. Gly32 to Ser40 lines the GTP pocket. Positions Val58–Arg60 are G2 motif. The segment at Asp138–Gly141 is G3 motif. The G4 motif stretch occupies residues Thr207–Asp210. Residues Thr207–Asp213 and Asn238–Gln241 each bind GTP. The segment at Ile237–Ser240 is G5 motif. Composition is skewed to low complexity over residues Asp523–Gln569 and Pro590–Gln607. The tract at residues Asp523–Gly738 is disordered. Positions Pro610 to Pro624 are enriched in polar residues. Low complexity-rich tracts occupy residues Asn625–Asn635 and Asn664–Asn728. The GED domain occupies Thr762–Asn853.

The protein belongs to the TRAFAC class dynamin-like GTPase superfamily. Dynamin/Fzo/YdjA family.

It is found in the cytoplasm. Its function is as follows. Function in membrane trafficking processes along the endo-lysosomal pathway. This Dictyostelium discoideum (Social amoeba) protein is Dynamin-A (dymA).